The chain runs to 387 residues: 3-ketoacyl-CoA thiolase (387 aa).

Cys91 serves as the catalytic Acyl-thioester intermediate. Residues His343 and Cys373 each act as proton acceptor in the active site.

This sequence belongs to the thiolase-like superfamily. Thiolase family. As to quaternary structure, heterotetramer of two alpha chains (FadB) and two beta chains (FadA).

It localises to the cytoplasm. It catalyses the reaction an acyl-CoA + acetyl-CoA = a 3-oxoacyl-CoA + CoA. The protein operates within lipid metabolism; fatty acid beta-oxidation. In terms of biological role, catalyzes the final step of fatty acid oxidation in which acetyl-CoA is released and the CoA ester of a fatty acid two carbons shorter is formed. The sequence is that of 3-ketoacyl-CoA thiolase from Escherichia coli O9:H4 (strain HS).